The primary structure comprises 690 residues: Eukaryotic translation initiation factor 3 subunit B (690 aa).

Residues 1–11 (MAKKKSEDHSG) are compositionally biased toward basic and acidic residues. The disordered stretch occupies residues 1-33 (MAKKKSEDHSGADANDSDYNEEPNFDDPPNFVD). Residues 15–25 (NDSDYNEEPNF) show a composition bias toward acidic residues. Residues 57–141 (SVVVVDNMPK…YTFAVNLFTD (85 aa)) enclose the RRM domain. WD repeat units lie at residues 207–246 (TRER…KIQK), 292–331 (GDGM…LLDL), 334–369 (IKIP…TLMK), 442–484 (EIRE…KPSL), and 530–575 (PDHF…IKRT). The stretch at 613-646 (EQKDRLRLTRASKELLEKRAQLRETFMEYRNKRI) forms a coiled coil.

It belongs to the eIF-3 subunit B family. As to quaternary structure, component of the eukaryotic translation initiation factor 3 (eIF-3) complex. The eIF-3 complex interacts with pix. Interacts with mxt.

The protein resides in the cytoplasm. In terms of biological role, RNA-binding component of the eukaryotic translation initiation factor 3 (eIF-3) complex, which is involved in protein synthesis of a specialized repertoire of mRNAs and, together with other initiation factors, stimulates binding of mRNA and methionyl-tRNAi to the 40S ribosome. The eIF-3 complex specifically targets and initiates translation of a subset of mRNAs involved in cell proliferation. The protein is Eukaryotic translation initiation factor 3 subunit B of Drosophila grimshawi (Hawaiian fruit fly).